We begin with the raw amino-acid sequence, 195 residues long: Nucleoid occlusion factor SlmA (195 aa).

In terms of domain architecture, HTH tetR-type spans 6–66 (PSRRESILQA…ALIEFAEEAV (61 aa)). A DNA-binding region (H-T-H motif) is located at residues 29 to 48 (TTAGLAKTVGVTEAALYRHF). The stretch at 118–138 (RKRASQFFERLETQIRQALKE) forms a coiled coil.

Belongs to the nucleoid occlusion factor SlmA family. In terms of assembly, homodimer. Interacts with FtsZ.

The protein resides in the cytoplasm. It localises to the nucleoid. In terms of biological role, required for nucleoid occlusion (NO) phenomenon, which prevents Z-ring formation and cell division over the nucleoid. Acts as a DNA-associated cell division inhibitor that binds simultaneously chromosomal DNA and FtsZ, and disrupts the assembly of FtsZ polymers. SlmA-DNA-binding sequences (SBS) are dispersed on non-Ter regions of the chromosome, preventing FtsZ polymerization at these regions. In Marinobacter nauticus (strain ATCC 700491 / DSM 11845 / VT8) (Marinobacter aquaeolei), this protein is Nucleoid occlusion factor SlmA.